The following is an 83-amino-acid chain: Small ribosomal subunit protein bS16 (83 aa).

It belongs to the bacterial ribosomal protein bS16 family.

The chain is Small ribosomal subunit protein bS16 from Shewanella frigidimarina (strain NCIMB 400).